Consider the following 86-residue polypeptide: U15-lycotoxin-Ls1g (86 aa).

A signal peptide spans 1 to 20; it reads MNSKIFAVLLLLGLLSCVLS. The region spanning 21–66 is the WAP domain; the sequence is DQYCPKSSITACKKMNIRNDCCKDDDCTGGSWCCATPCGNFCKYPA. 5 disulfide bridges follow: C24–C54, C32–C58, C41–C53, C42–C80, and C47–C62.

It belongs to the venom protein 11 family. 01 (wap-1) subfamily. In terms of processing, contains 5 disulfide bonds. As to expression, expressed by the venom gland.

The protein resides in the secreted. Functionally, has antibacterial activity. The chain is U15-lycotoxin-Ls1g from Lycosa singoriensis (Wolf spider).